The primary structure comprises 309 residues: L-aminoadipate-semialdehyde dehydrogenase-phosphopantetheinyl transferase (309 aa).

CoA-binding positions include arginine 47, 86–91, and 108–111; these read RTAKGK and NISH. Residues aspartate 129 and glutamate 181 each coordinate Mg(2+). Residue 181 to 185 coordinates CoA; sequence ESFIK. The residue at position 258 (serine 258) is a Phosphoserine.

Belongs to the P-Pant transferase superfamily. AcpS family. In terms of assembly, monomer. Mg(2+) is required as a cofactor. In terms of tissue distribution, detected in heart, skeletal muscle, placenta, testis, brain, pancreas, liver and kidney.

It is found in the cytoplasm. The protein resides in the cytosol. The catalysed reaction is apo-[ACP] + CoA = holo-[ACP] + adenosine 3',5'-bisphosphate + H(+). The enzyme catalyses apo-[ACP] + acetyl-CoA = acetyl-[ACP] + adenosine 3',5'-bisphosphate + H(+). Its function is as follows. Catalyzes the post-translational modification of target proteins by phosphopantetheine. Can transfer the 4'-phosphopantetheine moiety from coenzyme A, regardless of whether the CoA is presented in the free thiol form or as an acetyl thioester, to a serine residue of a broad range of acceptors including the acyl carrier domain of FASN. The protein is L-aminoadipate-semialdehyde dehydrogenase-phosphopantetheinyl transferase (AASDHPPT) of Homo sapiens (Human).